Here is a 368-residue protein sequence, read N- to C-terminus: Germination protease (368 aa).

The propeptide occupies 1–16 (MKKSELDVNQYLIRTD).

It belongs to the peptidase A25 family. Homotetramer. Post-translationally, autoproteolytically processed. The inactive tetrameric zymogen termed p46 autoprocesses to a smaller form termed p41, which is active only during spore germination.

The catalysed reaction is Endopeptidase action with P4 Glu or Asp, P1 preferably Glu &gt; Asp, P1' hydrophobic and P2' Ala.. Its function is as follows. Initiates the degradation of small, acid-soluble proteins during spore germination. The protein is Germination protease (gpr) of Bacillus subtilis (strain 168).